The sequence spans 173 residues: Ferritin, lower subunit (173 aa).

Residues 7 to 156 (QNFHQDCEAG…DHITSLKKLW (150 aa)) form the Ferritin-like diiron domain. Positions 59 and 62 each coordinate Fe cation.

This sequence belongs to the ferritin family. Oligomer of 24 subunits. The functional molecule is roughly spherical and contains a central cavity into which the polymeric mineral iron core is deposited.

Its function is as follows. Stores iron in a soluble, non-toxic, readily available form. Important for iron homeostasis. Iron is taken up in the ferrous form and deposited as ferric hydroxides after oxidation. The chain is Ferritin, lower subunit from Aquarana catesbeiana (American bullfrog).